A 118-amino-acid polypeptide reads, in one-letter code: Immunoglobulin lambda variable 2-8 (118 aa).

The N-terminal stretch at 1–19 (MAWALLLLTLLTQGTGSWA) is a signal peptide. Gln-20 carries the post-translational modification Pyrrolidone carboxylic acid. Residues 20 to 44 (QSALTQPPSASGSPGQSVTISCTGT) are framework-1. Residues 20–118 (QSALTQPPSA…CSSYAGSNNF (99 aa)) form the Ig-like domain. Cys-41 and Cys-109 form a disulfide bridge. Residues 45-53 (SSDVGGYNY) form a complementarity-determining-1 region. The tract at residues 54 to 70 (VSWYQQHPGKAPKLMIY) is framework-2. The complementarity-determining-2 stretch occupies residues 71-73 (EVS). The tract at residues 74–109 (KRPSGVPDRFSGSKSGNTASLTVSGLQAEDEADYYC) is framework-3. The interval 76-97 (PSGVPDRFSGSKSGNTASLTVS) is disordered. Residues 85 to 97 (GSKSGNTASLTVS) show a composition bias toward polar residues. Residues 110–118 (SSYAGSNNF) are complementarity-determining-3.

As to quaternary structure, immunoglobulins are composed of two identical heavy chains and two identical light chains; disulfide-linked.

The protein resides in the secreted. The protein localises to the cell membrane. V region of the variable domain of immunoglobulin light chains that participates in the antigen recognition. Immunoglobulins, also known as antibodies, are membrane-bound or secreted glycoproteins produced by B lymphocytes. In the recognition phase of humoral immunity, the membrane-bound immunoglobulins serve as receptors which, upon binding of a specific antigen, trigger the clonal expansion and differentiation of B lymphocytes into immunoglobulins-secreting plasma cells. Secreted immunoglobulins mediate the effector phase of humoral immunity, which results in the elimination of bound antigens. The antigen binding site is formed by the variable domain of one heavy chain, together with that of its associated light chain. Thus, each immunoglobulin has two antigen binding sites with remarkable affinity for a particular antigen. The variable domains are assembled by a process called V-(D)-J rearrangement and can then be subjected to somatic hypermutations which, after exposure to antigen and selection, allow affinity maturation for a particular antigen. The protein is Immunoglobulin lambda variable 2-8 of Homo sapiens (Human).